Reading from the N-terminus, the 862-residue chain is Probable alpha,alpha-trehalose-phosphate synthase [UDP-forming] 11 (862 aa).

S5 carries the phosphoserine modification. Residues 50 to 538 (PKRIVVSNQL…ARSYDQDLQR (489 aa)) are glycosyltransferase. The segment at 838-862 (SKHEQQKKQSKFTFQQPMGQCRKKA) is disordered.

This sequence in the N-terminal section; belongs to the glycosyltransferase 20 family. In the C-terminal section; belongs to the trehalose phosphatase family. In terms of tissue distribution, expressed in leaves, roots, stems and flowers.

It catalyses the reaction D-glucose 6-phosphate + UDP-alpha-D-glucose = alpha,alpha-trehalose 6-phosphate + UDP + H(+). This is Probable alpha,alpha-trehalose-phosphate synthase [UDP-forming] 11 (TPS11) from Arabidopsis thaliana (Mouse-ear cress).